A 353-amino-acid chain; its full sequence is Protein RecA (353 aa).

Position 74 to 81 (Gly74 to Thr81) interacts with ATP.

This sequence belongs to the RecA family.

It localises to the cytoplasm. In terms of biological role, can catalyze the hydrolysis of ATP in the presence of single-stranded DNA, the ATP-dependent uptake of single-stranded DNA by duplex DNA, and the ATP-dependent hybridization of homologous single-stranded DNAs. It interacts with LexA causing its activation and leading to its autocatalytic cleavage. The sequence is that of Protein RecA from Bordetella bronchiseptica (strain ATCC BAA-588 / NCTC 13252 / RB50) (Alcaligenes bronchisepticus).